A 407-amino-acid polypeptide reads, in one-letter code: Probable 2,3-bisphosphoglycerate-independent phosphoglycerate mutase (407 aa).

The disordered stretch occupies residues 175–200 (GSDAINDTDPQQVGKEPLEPKGENPN).

The protein belongs to the BPG-independent phosphoglycerate mutase family. A-PGAM subfamily.

The enzyme catalyses (2R)-2-phosphoglycerate = (2R)-3-phosphoglycerate. It participates in carbohydrate degradation; glycolysis; pyruvate from D-glyceraldehyde 3-phosphate: step 3/5. Catalyzes the interconversion of 2-phosphoglycerate and 3-phosphoglycerate. This chain is Probable 2,3-bisphosphoglycerate-independent phosphoglycerate mutase, found in Aquifex aeolicus (strain VF5).